Here is a 571-residue protein sequence, read N- to C-terminus: Proline--tRNA ligase (571 aa).

The protein belongs to the class-II aminoacyl-tRNA synthetase family. ProS type 1 subfamily. As to quaternary structure, homodimer.

It localises to the cytoplasm. It carries out the reaction tRNA(Pro) + L-proline + ATP = L-prolyl-tRNA(Pro) + AMP + diphosphate. Catalyzes the attachment of proline to tRNA(Pro) in a two-step reaction: proline is first activated by ATP to form Pro-AMP and then transferred to the acceptor end of tRNA(Pro). As ProRS can inadvertently accommodate and process non-cognate amino acids such as alanine and cysteine, to avoid such errors it has two additional distinct editing activities against alanine. One activity is designated as 'pretransfer' editing and involves the tRNA(Pro)-independent hydrolysis of activated Ala-AMP. The other activity is designated 'posttransfer' editing and involves deacylation of mischarged Ala-tRNA(Pro). The misacylated Cys-tRNA(Pro) is not edited by ProRS. The chain is Proline--tRNA ligase from Pediococcus pentosaceus (strain ATCC 25745 / CCUG 21536 / LMG 10740 / 183-1w).